The primary structure comprises 418 residues: D-amino acid dehydrogenase (418 aa).

3 to 17 (VLVLGAGVAGVSSAW) provides a ligand contact to FAD.

The protein belongs to the DadA oxidoreductase family. Requires FAD as cofactor.

It carries out the reaction a D-alpha-amino acid + A + H2O = a 2-oxocarboxylate + AH2 + NH4(+). Functionally, oxidative deamination of D-amino acids. The sequence is that of D-amino acid dehydrogenase from Neisseria meningitidis serogroup A / serotype 4A (strain DSM 15465 / Z2491).